A 506-amino-acid chain; its full sequence is Maturase K (506 aa).

This sequence belongs to the intron maturase 2 family. MatK subfamily.

The protein localises to the plastid. Its subcellular location is the chloroplast. Usually encoded in the trnK tRNA gene intron. Probably assists in splicing its own and other chloroplast group II introns. The chain is Maturase K from Crataegus monogyna (Hawthorn).